We begin with the raw amino-acid sequence, 358 residues long: Putative purine permease 12 (358 aa).

10 helical membrane-spanning segments follow: residues 29–49 (WILVFISIFFLISAQAISVLL), 62–82 (WISTLVQTGGFPILYLPLSLL), 100–120 (LVWIYLSLGFAIGLDNFLYSV), 128–148 (STYSILCASQLAFNGVFYYYI), 153–173 (ITCLIFFSVLFLSISAVLVSL), 189–209 (LIGCFCAVFASLIYSLQLSLM), 235–255 (VASCVAVIGLFASGEWMLLSV), 280–299 (LGCVGAVSLIFLVSSLFSNL), 300–316 (ISTLSLIVTPLAAIAVF), and 320–340 (LTEVKMVAMPIAFTGFTFYIY).

It belongs to the purine permeases (TC 2.A.7.14) family.

Its subcellular location is the membrane. This Arabidopsis thaliana (Mouse-ear cress) protein is Putative purine permease 12 (PUP12).